Reading from the N-terminus, the 162-residue chain is MFKFLVLTLGIISCQAYAEDTVIVNDHDISAIKDCWQKNSDDDTDVNVIKSCLRQEYNLVDAQLNKAYGEAYRYIEQVPRTGVKKPDTEQLNLLKKSQRAWLDFRDKECELILSNEDVQDLSDPYSESEWLSCMIIQTNTRTRQLQLYRNSEDFYPSPLTRG.

The protein to R.meliloti R02472.

This is an uncharacterized protein from Escherichia coli (strain K12).